A 304-amino-acid polypeptide reads, in one-letter code: Sulfate adenylyltransferase subunit 2 1 (304 aa).

Belongs to the PAPS reductase family. CysD subfamily. As to quaternary structure, heterodimer composed of CysD, the smaller subunit, and CysN.

The catalysed reaction is sulfate + ATP + H(+) = adenosine 5'-phosphosulfate + diphosphate. It participates in sulfur metabolism; hydrogen sulfide biosynthesis; sulfite from sulfate: step 1/3. Its function is as follows. With CysN forms the ATP sulfurylase (ATPS) that catalyzes the adenylation of sulfate producing adenosine 5'-phosphosulfate (APS) and diphosphate, the first enzymatic step in sulfur assimilation pathway. APS synthesis involves the formation of a high-energy phosphoric-sulfuric acid anhydride bond driven by GTP hydrolysis by CysN coupled to ATP hydrolysis by CysD. The chain is Sulfate adenylyltransferase subunit 2 1 from Marinobacter nauticus (strain ATCC 700491 / DSM 11845 / VT8) (Marinobacter aquaeolei).